A 296-amino-acid chain; its full sequence is Sulfotransferase 1C2 (296 aa).

49–54 (KSGTTW) is a 3'-phosphoadenylyl sulfate binding site. A substrate-binding site is contributed by 107-109 (RTH). H109 acts as the Proton acceptor in catalysis. Residues R131, S139, Y194, and 228–233 (TSFEKM) each bind 3'-phosphoadenylyl sulfate. At S139 the chain carries Phosphoserine. Residue S254 is modified to Phosphoserine. 256-260 (FMRKG) is a 3'-phosphoadenylyl sulfate binding site.

This sequence belongs to the sulfotransferase 1 family. As to expression, found in gastrointestinal tract tissues, liver and kidney.

It is found in the cytoplasm. The protein localises to the lysosome. It localises to the mitochondrion. It carries out the reaction a phenol + 3'-phosphoadenylyl sulfate = an aryl sulfate + adenosine 3',5'-bisphosphate + H(+). The enzyme catalyses cholesterol + 3'-phosphoadenylyl sulfate = cholesterol sulfate + adenosine 3',5'-bisphosphate + H(+). In terms of biological role, sulfotransferase that utilizes 3'-phospho-5'-adenylyl sulfate (PAPS) to catalyze the sulfate conjugation of phenolic compounds. Does not transfer sulfate to steroids, dopamine, acetaminophen, or alpha-naphthol. Except in mitochondria, where it can add sulfate to cholesterol producing cholesterol sulfate, which alters mitochondrial membrane organization, and impacts protein complex mobility increasing state-III respiration, thereby modulating mitochondrial respiration. Catalyzes the sulfation of the carcinogenic N-hydroxy-2-acetylaminofluorene leading to highly reactive intermediates capable of forming DNA adducts, potentially resulting in mutagenesis. This chain is Sulfotransferase 1C2 (SULT1C2), found in Oryctolagus cuniculus (Rabbit).